Reading from the N-terminus, the 504-residue chain is MSNASLSWLTKLNTSETPDKVLRRSSIIGTIGPKTNNVDVLVKLRKAGLNIVRMNFSHGSYEYHQSVIDNAKQSEEIYKGRPLAIALDTKGPEIRTGTTIDDKDYPILPNHEMIFTTDEAYAKKCDDKVMFIDYKNITKVIEAGKIIYIDDGVVSFEVLQIVDDKTLKVRSVNSGKICSHKGVNLPGTDVDLPALSEKDKADIKFGVKNGVHMIFASFIRTGDDIKEIRKVLGEEGKDIQIIAKIENQQGVNNFDEILVETDGVMVARGDLGIEIPAPQVFVVQKQLIAKCNLAAKPVICATQMLESMTYNPRPTRAEVSDVGNAILDGADCVMLSGETAKGNYPFEAVSMMHNTAIIAEKAIAYQPLHNEIRSLANRPTPTTETCAMASVSAAYEQDAKAIVVLSTSGFTSRLVSKYKPNVPVMMVTRNHRAARYCHLYRGVYPFVYEKKTVDNWQEDVENRLRWAVSEAIDLGIIKKGDSIVTIQGWTRGSGHSNTVRVVQA.

Residue Arg53 coordinates substrate. Residues Asn55, Ser57, Asp88, and Thr89 each contribute to the K(+) site. Position 55–58 (Asn55–His58) interacts with ATP. ATP-binding residues include Arg95 and Lys181. Glu246 contributes to the Mg(2+) binding site. Residues Gly269, Asp270, and Thr302 each contribute to the substrate site. Asp270 serves as a coordination point for Mg(2+).

Belongs to the pyruvate kinase family. In terms of assembly, homotetramer. The cofactor is Mg(2+). Requires K(+) as cofactor.

The catalysed reaction is pyruvate + ATP = phosphoenolpyruvate + ADP + H(+). The protein operates within carbohydrate degradation; glycolysis; pyruvate from D-glyceraldehyde 3-phosphate: step 5/5. This is Pyruvate kinase (PYK1) from Debaryomyces hansenii (strain ATCC 36239 / CBS 767 / BCRC 21394 / JCM 1990 / NBRC 0083 / IGC 2968) (Yeast).